We begin with the raw amino-acid sequence, 292 residues long: Non-homologous end joining protein Ku (292 aa).

The Ku domain occupies 9–187; the sequence is ITFGLVNVPV…TVPPITEREL (179 aa). Residues 264 to 285 show a composition bias toward low complexity; that stretch reads AASAFPAAEKAPAGKNAATASA. Residues 264–292 form a disordered region; sequence AASAFPAAEKAPAGKNAATASAKKARKLA.

The protein belongs to the prokaryotic Ku family. Homodimer. Interacts with LigD.

With LigD forms a non-homologous end joining (NHEJ) DNA repair enzyme, which repairs dsDNA breaks with reduced fidelity. Binds linear dsDNA with 5'- and 3'- overhangs but not closed circular dsDNA nor ssDNA. Recruits and stimulates the ligase activity of LigD. This is Non-homologous end joining protein Ku from Leifsonia xyli subsp. xyli (strain CTCB07).